Reading from the N-terminus, the 289-residue chain is Complement C1q tumor necrosis factor-related protein 7 (289 aa).

The first 16 residues, 1-16 (MIVLLYVTSLAICASG), serve as a signal peptide directing secretion. Residues 36–134 (IPGLPGPPGP…GDRGDQGDPG (99 aa)) form a disordered region. A Collagen-like domain is found at 38 to 139 (GLPGPPGPPG…QGDPGLPGVC (102 aa)). The segment covering 48-61 (ANGSPGPHGRIGLP) has biased composition (low complexity). Positions 63–76 (RDGRDGRKGEKGEK) are enriched in basic and acidic residues. Residues 78 to 91 (TAGLKGKTGPLGLA) show a composition bias toward low complexity. Residues 93–102 (EKGDQGETGK) show a composition bias toward basic and acidic residues. In terms of domain architecture, C1q spans 143–279 (SIVLKSAFSV…GFLLYVDTDY (137 aa)).

The protein localises to the secreted. The polypeptide is Complement C1q tumor necrosis factor-related protein 7 (C1qtnf7) (Mus musculus (Mouse)).